The following is a 430-amino-acid chain: Protein translocase subunit SecY (430 aa).

The next 10 membrane-spanning stretches (helical) occupy residues 18–38 (IFFT…PAPG), 68–88 (FSIF…MQLL), 117–137 (FAII…NNYL), 148–168 (MSYL…LWLG), 179–199 (GISI…LIQF), 215–235 (LQVA…VYVL), 270–290 (VIPV…TMFF), 308–328 (NIGM…YAFV), 368–388 (FVGS…TKFM), and 390–410 (LPQS…VAIE).

This sequence belongs to the SecY/SEC61-alpha family. In terms of assembly, component of the Sec protein translocase complex. Heterotrimer consisting of SecY, SecE and SecG subunits. The heterotrimers can form oligomers, although 1 heterotrimer is thought to be able to translocate proteins. Interacts with the ribosome. Interacts with SecDF, and other proteins may be involved. Interacts with SecA.

It is found in the cell membrane. Its function is as follows. The central subunit of the protein translocation channel SecYEG. Consists of two halves formed by TMs 1-5 and 6-10. These two domains form a lateral gate at the front which open onto the bilayer between TMs 2 and 7, and are clamped together by SecE at the back. The channel is closed by both a pore ring composed of hydrophobic SecY resides and a short helix (helix 2A) on the extracellular side of the membrane which forms a plug. The plug probably moves laterally to allow the channel to open. The ring and the pore may move independently. The protein is Protein translocase subunit SecY of Staphylococcus carnosus (strain TM300).